The primary structure comprises 495 residues: Sugar phosphate exchanger 3 (495 aa).

A helical transmembrane segment spans residues 16-36; sequence FSHHHMVVFLLTFFSYSLLHA. Asparagine 58 is a glycosylation site (N-linked (GlcNAc...) asparagine). Helical transmembrane passes span 82–102, 114–134, 148–168, 178–198, and 210–230; these read TLFL…GLFI, WVLS…GTLT, LWIV…AVMG, VVFG…ACLA, and FLVT…GLLV. N-linked (GlcNAc...) asparagine glycosylation is present at asparagine 267. 6 consecutive transmembrane segments (helical) span residues 298 to 318, 334 to 354, 358 to 378, 387 to 407, 429 to 449, and 453 to 473; these read LAYA…PFYL, IWYD…SDML, APVL…YSRS, LLMA…SSAI, GIVD…VSLI, and LGWM…VLFI.

It belongs to the major facilitator superfamily. Organophosphate:Pi antiporter (OPA) (TC 2.A.1.4) family. Interacts with ATRAID; the interaction is direct and both proteins are mutually dependent for their stability. In terms of processing, glycosylated.

Its subcellular location is the endoplasmic reticulum membrane. The protein localises to the lysosome membrane. Unlike the other SLC37 members, lacks glucose-6-phosphate antiporter activity. In osteoclasts, forms a transporter complex with ATRAID for nitrogen-containing-bisphophonates (N-BPs) required for releasing N-BP molecules that have trafficked to lysosomes through fluid-phase endocytosis into the cytosol. In Bos taurus (Bovine), this protein is Sugar phosphate exchanger 3 (SLC37A3).